The sequence spans 911 residues: DNA mismatch repair protein MutS (911 aa).

660 to 667 is an ATP binding site; that stretch reads GPNMAGKS.

The protein belongs to the DNA mismatch repair MutS family.

This protein is involved in the repair of mismatches in DNA. It is possible that it carries out the mismatch recognition step. This protein has a weak ATPase activity. The chain is DNA mismatch repair protein MutS from Rhodopseudomonas palustris (strain HaA2).